A 121-amino-acid polypeptide reads, in one-letter code: Nitrogen fixation nifHD region glnB-like protein 2 (121 aa).

It belongs to the P(II) protein family.

In terms of biological role, could be involved in the regulation of nitrogen fixation. The polypeptide is Nitrogen fixation nifHD region glnB-like protein 2 (glnBII) (Methanococcus maripaludis (Methanococcus deltae)).